Here is a 98-residue protein sequence, read N- to C-terminus: U1-theraphotoxin-Ap1a (98 aa).

The N-terminal stretch at 1 to 23 is a signal peptide; it reads MRSLTLAAVLACSLLLVFHTSAA. The propeptide occupies 24-50; it reads EELEVQDGHLMNPGDGDTALATVDDER. Disulfide bonds link Cys-54-Cys-84, Cys-58-Cys-90, and Cys-72-Cys-95. Residues 63-84 form a disordered region; that stretch reads DGKSKEGKPCKPKGDKNKDKKC.

The protein belongs to the neurotoxin 12 (Hwtx-2) family. 01 (Ap1a) subfamily. As to expression, expressed by the venom gland.

Its subcellular location is the secreted. In terms of biological role, is toxic to both insects and mammals. Induces reversible paralysis when injected into S.frugiperda larvae. Reduces both the amplitude and frequency of responses from muscle (GF-TTM and GF-DLM) pathways in the D.melanogaster giant fiber circuit, suggesting an action at the neuromuscular junction, which is mediated by glutamatergic receptors. In mice, intracranial injection of 30 ug causes increased urination, myoclonus, hypermotility with circular movements followed by respiratory and generalized seizures resulting in death within 25-35 minutes of injection. The polypeptide is U1-theraphotoxin-Ap1a (Acanthoscurria paulensis (Brazilian giant black tarantula spider)).